Here is a 183-residue protein sequence, read N- to C-terminus: Transcription termination/antitermination protein NusG (183 aa).

The KOW domain occupies 131 to 161 (PGEEVRVTEGPFADFNGTVEEVDYEKGRLKV).

This sequence belongs to the NusG family.

Functionally, participates in transcription elongation, termination and antitermination. The sequence is that of Transcription termination/antitermination protein NusG from Pasteurella multocida (strain Pm70).